A 210-amino-acid chain; its full sequence is Prolactin (210 aa).

Positions 1 to 23 (MARRSQGTKLHLAVLCLVVSCHA) are cleaved as a signal peptide. Cystine bridges form between Cys-69-Cys-183 and Cys-200-Cys-210.

It belongs to the somatotropin/prolactin family. In terms of tissue distribution, pituitary gland.

It is found in the secreted. This is Prolactin (prl) from Coregonus autumnalis (Arctic cisco).